The primary structure comprises 276 residues: Insulin-like growth factor-binding protein 2-A (276 aa).

Residues 1 to 22 form the signal peptide; sequence MLSYVSCGLLLALVTFHGTARS. The region spanning 24–105 is the IGFBP N-terminal domain; the sequence is MVFRCPSCTA…VQGLGRCGRK (82 aa). 9 disulfides stabilise this stretch: Cys28–Cys55, Cys31–Cys57, Cys39–Cys58, Cys46–Cys61, Cys69–Cys82, Cys76–Cys102, Cys180–Cys214, Cys225–Cys236, and Cys238–Cys259. In terms of domain architecture, Thyroglobulin type-1 spans 177 to 259; that stretch reads QSQCQQELDQ…SPLIRGDPNC (83 aa). The short motif at 254 to 256 is the Cell attachment site element; the sequence is RGD.

In terms of assembly, interacts equally well with igf1 and igf2. As to expression, in embryos at 24 hpf, initially expressed in the lens and cranial region, and at 48 and 72 hpf in the brain boundary vasculature. Expression in these regions persists throughout the hatching period and by 96 hpf expression is most abundant in the liver. In both male and female adults, highest expression is in the liver with modest expression in the brain. In male but not females adults, expressed at a low level in muscle and gonad. Also expressed in the adult intestine.

It localises to the secreted. IGF-binding proteins prolong the half-life of the IGFs and have been shown to either inhibit or stimulate the growth promoting effects of the IGFs on cell culture. They alter the interaction of IGFs with their cell surface receptors. This chain is Insulin-like growth factor-binding protein 2-A (igfbp2a), found in Danio rerio (Zebrafish).